A 199-amino-acid polypeptide reads, in one-letter code: N-(5'-phosphoribosyl)anthranilate isomerase (199 aa).

The protein belongs to the TrpF family.

The enzyme catalyses N-(5-phospho-beta-D-ribosyl)anthranilate = 1-(2-carboxyphenylamino)-1-deoxy-D-ribulose 5-phosphate. Its pathway is amino-acid biosynthesis; L-tryptophan biosynthesis; L-tryptophan from chorismate: step 3/5. The sequence is that of N-(5'-phosphoribosyl)anthranilate isomerase from Solibacter usitatus (strain Ellin6076).